A 200-amino-acid chain; its full sequence is Dephospho-CoA kinase (200 aa).

Residues 4-200 (VIGLTGGIGS…QKYIKMSHLY (197 aa)) enclose the DPCK domain. 12-17 (GSGKTT) contributes to the ATP binding site.

This sequence belongs to the CoaE family.

The protein localises to the cytoplasm. It carries out the reaction 3'-dephospho-CoA + ATP = ADP + CoA + H(+). It functions in the pathway cofactor biosynthesis; coenzyme A biosynthesis; CoA from (R)-pantothenate: step 5/5. In terms of biological role, catalyzes the phosphorylation of the 3'-hydroxyl group of dephosphocoenzyme A to form coenzyme A. This chain is Dephospho-CoA kinase, found in Photobacterium profundum (strain SS9).